The following is a 103-amino-acid chain: Large ribosomal subunit protein P1 (103 aa).

Positions 66-103 (PAAGAPAAGAAGGAVEEKKEEKKAESEDESDDDMGLFD) are disordered. Residues 80 to 90 (VEEKKEEKKAE) are compositionally biased toward basic and acidic residues. The span at 91–103 (SEDESDDDMGLFD) shows a compositional bias: acidic residues.

This sequence belongs to the eukaryotic ribosomal protein P1/P2 family. P1 and P2 exist as dimers at the large ribosomal subunit.

Functionally, plays an important role in the elongation step of protein synthesis. The sequence is that of Large ribosomal subunit protein P1 from Polyorchis penicillatus (Hydromedusa).